We begin with the raw amino-acid sequence, 262 residues long: Tritrans,polycis-undecaprenyl-diphosphate synthase (geranylgeranyl-diphosphate specific) (262 aa).

Asp40 is a catalytic residue. Asp40 serves as a coordination point for Mg(2+). Substrate contacts are provided by residues 41–44 (GNRR), Trp45, and 85–87 (STE). Catalysis depends on Asn88, which acts as the Proton acceptor. Substrate is bound by residues Arg92, Arg211, and 217 to 219 (RIS). Glu230 lines the Mg(2+) pocket.

It belongs to the UPP synthase family. Homodimer. Requires Mg(2+) as cofactor.

It carries out the reaction geranylgeranyl diphosphate + 7 isopentenyl diphosphate = tri-trans,hepta-cis-undecaprenyl diphosphate + 7 diphosphate. Catalyzes the sequential condensation of isopentenyl diphosphate (IPP) with geranylgeranyl diphosphate (GGPP) to yield (2Z,6Z,10Z,14Z,18Z,22Z,26Z,30E,34E,38E)-undecaprenyl diphosphate (tritrans,heptacis-UPP). It is probably the precursor of glycosyl carrier lipids. This chain is Tritrans,polycis-undecaprenyl-diphosphate synthase (geranylgeranyl-diphosphate specific), found in Sulfurisphaera tokodaii (strain DSM 16993 / JCM 10545 / NBRC 100140 / 7) (Sulfolobus tokodaii).